We begin with the raw amino-acid sequence, 440 residues long: Alpha-methylserine aldolase (440 aa).

The residue at position 255 (Lys255) is an N6-(pyridoxal phosphate)lysine.

Belongs to the SHMT family. Alpha-methylserine aldolase subfamily. In terms of assembly, homodimer. Requires pyridoxal 5'-phosphate as cofactor.

The enzyme catalyses 2-methyl-L-serine = formaldehyde + L-alanine. It catalyses the reaction 2-ethyl-L-serine = (2S)-2-aminobutanoate + formaldehyde. Its activity is regulated as follows. In the alpha-methyl-L-serine synthesis reaction, activity is inhibited by an excess amount of formaldehyde (at a concentration greater than 4 mM). Formaldehyde release activity is reduced by the sulfhydryl reagent N-ethylmaleimide, iodoacetate amide and iodoacetic acid, but not by dithiothreitol and 2-mercaptoethanol. Activity is enhanced by 1 mM of manganese chloride. In terms of biological role, catalyzes the reversible interconversion of alpha-methyl-L-serine to L-alanine and formaldehyde. Can also catalyze the synthesis of alpha-ethyl-L-serine from L-2-aminobutyric acid and formaldehyde. Also shows low alanine racemase activity. Cannot use alpha-methyl-D-serine, L-serine, D-serine, (S)-2-amino-1-propanol, (R)-2-amino-1-propanol, (S)-alpha-hydroxymethyltyrosine, (R)-alpha-hydroxymethyltyrosine, alpha-iso-butyl-DL-serine, alpha-iso-propyl-DL-serine or alpha-benzyl-DL-serine. Cannot use D-alanine instead of L-alanine as the substrate for alpha-methyl-L-serine synthesis. Does not require tetrahydrofolate (THF) for activity. This chain is Alpha-methylserine aldolase, found in Variovorax paradoxus.